The sequence spans 224 residues: uncharacterized protein (224 aa).

The segment at 11–42 (YYCKYCQIFVKDTPFARRSHEQTYKHQDAIKK) adopts a Matrin-type zinc-finger fold. A compositionally biased stretch (low complexity) spans 67-80 (ATATTASAVSSELA). 2 disordered regions span residues 67–158 (ATAT…RNRE) and 172–224 (VKPK…YDQS). The segment covering 87-98 (KEHPKLRPSKKK) has biased composition (basic residues). Low complexity predominate over residues 108–122 (TSSTETDTISTTHTS). Positions 175–199 (KNLDKVPKLAENEGNKSLESKESNE) are enriched in basic and acidic residues. The segment covering 203–216 (VFKKKKSGKLRTKS) has biased composition (basic residues).

Its subcellular location is the nucleus. It localises to the nucleolus. This is an uncharacterized protein from Schizosaccharomyces pombe (strain 972 / ATCC 24843) (Fission yeast).